We begin with the raw amino-acid sequence, 188 residues long: Glutathione S-transferase 2 (188 aa).

The 78-residue stretch at 2-79 (VHYKLMCFDV…FLARQYGYSG (78 aa)) folds into the GST N-terminal domain. Residues Lys-43, 49-51 (GQL), and 63-64 (QS) each bind glutathione. Residues 81–188 (TPTEEMQVDS…PHLNVFIRKL (108 aa)) enclose the GST C-terminal domain.

The protein belongs to the GST superfamily. Sigma family.

The catalysed reaction is RX + glutathione = an S-substituted glutathione + a halide anion + H(+). Functionally, conjugation of reduced glutathione to a wide number of exogenous and endogenous hydrophobic electrophiles. This Caenorhabditis elegans protein is Glutathione S-transferase 2 (gst-2).